We begin with the raw amino-acid sequence, 383 residues long: Cytochrome b (383 aa).

Transmembrane regions (helical) follow at residues 32–52 (VGSL…FLAM), 76–98 (WLMR…LHMG), 113–133 (VWSM…MGYC), and 179–199 (FFAL…MHFM). 2 residues coordinate heme b: His-82 and His-96. The heme b site is built by His-183 and His-197. His-202 lines the a ubiquinone pocket. The next 4 helical transmembrane spans lie at 225–245 (FVFK…LFVF), 289–309 (LGGV…PMTD), 321–341 (LSKL…NMGQ), and 348–368 (FIEL…MLVP).

It belongs to the cytochrome b family. Fungal cytochrome b-c1 complex contains 10 subunits; 3 respiratory subunits, 2 core proteins and 5 low-molecular weight proteins. Cytochrome b-c1 complex is a homodimer. The cofactor is heme b.

The protein resides in the mitochondrion inner membrane. Functionally, component of the ubiquinol-cytochrome c reductase complex (complex III or cytochrome b-c1 complex) that is part of the mitochondrial respiratory chain. The b-c1 complex mediates electron transfer from ubiquinol to cytochrome c. Contributes to the generation of a proton gradient across the mitochondrial membrane that is then used for ATP synthesis. The sequence is that of Cytochrome b (COB) from Debaryomyces hansenii (strain ATCC 36239 / CBS 767 / BCRC 21394 / JCM 1990 / NBRC 0083 / IGC 2968) (Yeast).